We begin with the raw amino-acid sequence, 93 residues long: Large ribosomal subunit protein uL23cz/uL23cy (93 aa).

This sequence belongs to the universal ribosomal protein uL23 family. Part of the 50S ribosomal subunit.

The protein localises to the plastid. It is found in the chloroplast. In terms of biological role, binds to 23S rRNA. In Cucumis sativus (Cucumber), this protein is Large ribosomal subunit protein uL23cz/uL23cy (rpl23-A).